The sequence spans 310 residues: p-hydroxybenzoic acid efflux pump subunit AaeA (310 aa).

Residues 12 to 32 (AITVALVILAFIAISRAWVFY) traverse the membrane as a helical segment.

Belongs to the membrane fusion protein (MFP) (TC 8.A.1) family.

The protein resides in the cell inner membrane. Functionally, forms an efflux pump with AaeB. The sequence is that of p-hydroxybenzoic acid efflux pump subunit AaeA from Enterobacter sp. (strain 638).